Here is a 288-residue protein sequence, read N- to C-terminus: Glutamate racemase (288 aa).

Substrate is bound by residues 10-11 (DS) and 42-43 (YG). The active-site Proton donor/acceptor is the C73. 74–75 (NT) serves as a coordination point for substrate. Residue C184 is the Proton donor/acceptor of the active site. Residue 185–186 (TH) coordinates substrate.

Belongs to the aspartate/glutamate racemases family.

It carries out the reaction L-glutamate = D-glutamate. It functions in the pathway cell wall biogenesis; peptidoglycan biosynthesis. Functionally, provides the (R)-glutamate required for cell wall biosynthesis. This is Glutamate racemase from Corynebacterium kroppenstedtii (strain DSM 44385 / JCM 11950 / CIP 105744 / CCUG 35717).